A 78-amino-acid polypeptide reads, in one-letter code: Acyl carrier protein (78 aa).

One can recognise a Carrier domain in the interval 2-77; that stretch reads QNIEKKIKKI…SIFDIIKKYV (76 aa). An O-(pantetheine 4'-phosphoryl)serine modification is found at Ser-37.

This sequence belongs to the acyl carrier protein (ACP) family. 4'-phosphopantetheine is transferred from CoA to a specific serine of apo-ACP by AcpS. This modification is essential for activity because fatty acids are bound in thioester linkage to the sulfhydryl of the prosthetic group.

The protein resides in the cytoplasm. Its pathway is lipid metabolism; fatty acid biosynthesis. Functionally, carrier of the growing fatty acid chain in fatty acid biosynthesis. The protein is Acyl carrier protein of Buchnera aphidicola subsp. Baizongia pistaciae (strain Bp).